The sequence spans 145 residues: Deoxyuridine 5'-triphosphate nucleotidohydrolase (145 aa).

Substrate is bound by residues 63–65 (RSG), Gln76, and 80–82 (TVD).

It belongs to the dUTPase family. Requires Mg(2+) as cofactor.

It carries out the reaction dUTP + H2O = dUMP + diphosphate + H(+). It participates in pyrimidine metabolism; dUMP biosynthesis; dUMP from dCTP (dUTP route): step 2/2. In terms of biological role, this enzyme is involved in nucleotide metabolism: it produces dUMP, the immediate precursor of thymidine nucleotides and it decreases the intracellular concentration of dUTP so that uracil cannot be incorporated into DNA. In Chlamydia trachomatis serovar L2 (strain ATCC VR-902B / DSM 19102 / 434/Bu), this protein is Deoxyuridine 5'-triphosphate nucleotidohydrolase.